Here is a 453-residue protein sequence, read N- to C-terminus: MCCYLNLLMIQFESSHICHWFWNTPYRALQRAYKASKKVRNIHTNYIFCKSKPAFQRFGYNLDLYIDSILDESSFQIYWGLLEFKASRFVLTKFSNLIFKHNFHLLTQTDGNKLFSNSFDREQSLLFCDIHSTSLKIINRKLAWIEAALADLEMLRDNSSSTSITPILNKVYNVSLPMSLDSTSKRVAYESVGLVPRSITRTFARFQTELAGRSVSVVLPEFRLAKYQATASVQYMACLIFLPWVFSTICKIIFLQPLVSHYWDTMQTQVFFNASQEQRALRRLQQIEELLWLDIVIASVPNKHLQDIAGEIHNKTLELVDIYNRESICTILNLLTDWISITCLACLLTWGKKRLAIFNSWIQELFYSLSDTMKAFFILLLTDLCIGFHSPHGWEIIITLFLEHIGFAHNKYVVSCFVSTFPVILDTVLKYWIFRHLNRISPSIVVTYHTMNE.

4 helical membrane passes run 235 to 255 (YMAC…IIFL), 328 to 348 (ICTI…ACLL), 378 to 398 (ILLL…EIII), and 414 to 434 (VSCF…YWIF).

Belongs to the CemA family.

The protein localises to the plastid. Its subcellular location is the chloroplast inner membrane. The catalysed reaction is K(+)(in) + H(+)(out) = K(+)(out) + H(+)(in). Functionally, contributes to K(+)/H(+) antiport activity by supporting proton efflux to control proton extrusion and homeostasis in chloroplasts in a light-dependent manner to modulate photosynthesis. Prevents excessive induction of non-photochemical quenching (NPQ) under continuous-light conditions. Indirectly promotes efficient inorganic carbon uptake into chloroplasts. This Zygnema circumcarinatum (Green alga) protein is Potassium/proton antiporter CemA.